Here is a 179-residue protein sequence, read N- to C-terminus: Large ribosomal subunit protein uL5 (179 aa).

This sequence belongs to the universal ribosomal protein uL5 family. In terms of assembly, part of the 50S ribosomal subunit; part of the 5S rRNA/L5/L18/L25 subcomplex. Contacts the 5S rRNA and the P site tRNA. Forms a bridge to the 30S subunit in the 70S ribosome.

This is one of the proteins that bind and probably mediate the attachment of the 5S RNA into the large ribosomal subunit, where it forms part of the central protuberance. In the 70S ribosome it contacts protein S13 of the 30S subunit (bridge B1b), connecting the 2 subunits; this bridge is implicated in subunit movement. Contacts the P site tRNA; the 5S rRNA and some of its associated proteins might help stabilize positioning of ribosome-bound tRNAs. This is Large ribosomal subunit protein uL5 from Buchnera aphidicola subsp. Baizongia pistaciae (strain Bp).